An 867-amino-acid chain; its full sequence is Transcription factor E2F8 (867 aa).

A disordered region spans residues 38-58; the sequence is DFGPLTTPTKPKEGSQGEPWT. Phosphoserine occurs at positions 71 and 102. DNA-binding regions lie at residues 113–182 and 261–347; these read RKEK…TWHG and RKDK…KWTG. Disordered regions lie at residues 408-432, 532-616, and 771-800; these read RRKINSAPSSPIKTNKAESSQNSAP, QSVT…SGSK, and APENAGTQQGRATNYDSPVPGQSQPNGQSV. Residues S413 and S417 each carry the phosphoserine modification. 2 stretches are compositionally biased toward polar residues: residues 413-432 and 532-556; these read SAPSSPIKTNKAESSQNSAP and QSVTPPQGLSPTVCTTHSSKATGSK. Residues 557–567 are compositionally biased toward basic and acidic residues; sequence DSTDATTEKAA. A compositionally biased stretch (polar residues) spans 568-579; sequence NDTSKASASTRP. Over residues 594 to 604 the composition is skewed to basic and acidic residues; the sequence is RTREPAGERGS. Polar residues predominate over residues 775–800; that stretch reads AGTQQGRATNYDSPVPGQSQPNGQSV.

Belongs to the E2F/DP family. In terms of assembly, homodimer and heterodimer: mainly forms homodimers and, to a lesser extent, heterodimers with E2F8. Dimerization is important for DNA-binding. Interacts with HIF1A.

The protein resides in the nucleus. Functionally, atypical E2F transcription factor that participates in various processes such as angiogenesis and polyploidization of specialized cells. Mainly acts as a transcription repressor that binds DNA independently of DP proteins and specifically recognizes the E2 recognition site 5'-TTTC[CG]CGC-3'. Directly represses transcription of classical E2F transcription factors such as E2F1: component of a feedback loop in S phase by repressing the expression of E2F1, thereby preventing p53/TP53-dependent apoptosis. Plays a key role in polyploidization of cells in placenta and liver by regulating the endocycle, probably by repressing genes promoting cytokinesis and antagonizing action of classical E2F proteins (E2F1, E2F2 and/or E2F3). Required for placental development by promoting polyploidization of trophoblast giant cells. Acts as a promoter of sprouting angiogenesis, possibly by acting as a transcription activator: associates with HIF1A, recognizes and binds the VEGFA promoter, which is different from canonical E2 recognition site, and activates expression of the VEGFA gene. The protein is Transcription factor E2F8 (E2F8) of Homo sapiens (Human).